The following is a 215-amino-acid chain: Leucyl/phenylalanyl-tRNA--protein transferase (215 aa).

This sequence belongs to the L/F-transferase family.

The protein resides in the cytoplasm. The catalysed reaction is N-terminal L-lysyl-[protein] + L-leucyl-tRNA(Leu) = N-terminal L-leucyl-L-lysyl-[protein] + tRNA(Leu) + H(+). It catalyses the reaction N-terminal L-arginyl-[protein] + L-leucyl-tRNA(Leu) = N-terminal L-leucyl-L-arginyl-[protein] + tRNA(Leu) + H(+). It carries out the reaction L-phenylalanyl-tRNA(Phe) + an N-terminal L-alpha-aminoacyl-[protein] = an N-terminal L-phenylalanyl-L-alpha-aminoacyl-[protein] + tRNA(Phe). Its function is as follows. Functions in the N-end rule pathway of protein degradation where it conjugates Leu, Phe and, less efficiently, Met from aminoacyl-tRNAs to the N-termini of proteins containing an N-terminal arginine or lysine. The protein is Leucyl/phenylalanyl-tRNA--protein transferase of Campylobacter jejuni subsp. doylei (strain ATCC BAA-1458 / RM4099 / 269.97).